The sequence spans 465 residues: Cerebellar degeneration-related protein 2-like (465 aa).

Coiled-coil stretches lie at residues 31 to 64 (AAEL…HEIE), 91 to 142 (ARDL…LEQL), and 188 to 266 (LEQE…YLLA). The tract at residues 282-315 (APEADDPQPGSGDDSNAQDGVSSPAASPSHAVRK) is disordered. Residues Ser308, Ser318, and Ser344 each carry the phosphoserine modification. A coiled-coil region spans residues 350 to 377 (MSILREVDEQYHALLEKYEELLSKCRQH). Residues 382–421 (RHAGVQTSRPISRDSSWRDLLGGEESPGEGKAGEKSLSQH) form a disordered region. Ser407 is subject to Phosphoserine.

Belongs to the CDR2 family.

The sequence is that of Cerebellar degeneration-related protein 2-like (Cdr2l) from Mus musculus (Mouse).